Reading from the N-terminus, the 136-residue chain is Histone H3.3-like type 2 (136 aa).

A disordered region spans residues 1-20 (MARTKQTARKSTGGKAPRKA). Residues K5 and K10 each carry the N6-acetyllysine; alternate modification. K5 and K10 each carry N6-methylated lysine; alternate. Residue S11 is modified to Phosphoserine. N6-acetyllysine is present on residues K15 and K24. The residue at position 28 (K28) is an N6-methylated lysine. Position 29 is a phosphoserine (S29). K37 and K80 each carry N6-methylated lysine.

It belongs to the histone H3 family. The nucleosome is a histone octamer containing two molecules each of H2A, H2B, H3 and H4 assembled in one H3-H4 heterotetramer and two H2A-H2B heterodimers. The octamer wraps approximately 147 bp of DNA. Post-translationally, acetylation is generally linked to gene activation. Methylation at Lys-5 is linked to gene activation. Methylation at Lys-10 is linked to gene repression.

The protein localises to the nucleus. It is found in the chromosome. Functionally, putative variant histone H3 which may replace conventional H3 in a subset of nucleosomes. Nucleosomes wrap and compact DNA into chromatin, limiting DNA accessibility to the cellular machineries which require DNA as a template. Histones thereby play a central role in transcription regulation, DNA repair, DNA replication and chromosomal stability. DNA accessibility is regulated via a complex set of post-translational modifications of histones, also called histone code, and nucleosome remodeling. The sequence is that of Histone H3.3-like type 2 (his-74) from Caenorhabditis elegans.